A 349-amino-acid polypeptide reads, in one-letter code: Putative inosamine-phosphate amidinotransferase 2 (349 aa).

Belongs to the amidinotransferase family.

The enzyme catalyses 1-amino-1-deoxy-scyllo-inositol 4-phosphate + L-arginine = 1-guanidino-1-deoxy-scyllo-inositol 4-phosphate + L-ornithine. It participates in antibiotic biosynthesis; streptomycin biosynthesis. It is not obvious if strB2 participates in streptomycin biosynthesis as an inosamine-phosphate amidinotransferase. Attempt to measure its activity have failed and the nucleophilic cysteine which is the key residue for amidine transfer is not conserved but replaced by a glycine residue. The chain is Putative inosamine-phosphate amidinotransferase 2 (strB2) from Streptomyces griseus.